The sequence spans 218 residues: Phosphoglycolate phosphatase (218 aa).

The active-site Nucleophile is the D7. Mg(2+)-binding residues include D7, D9, and D167.

Belongs to the HAD-like hydrolase superfamily. CbbY/CbbZ/Gph/YieH family. Requires Mg(2+) as cofactor.

It carries out the reaction 2-phosphoglycolate + H2O = glycolate + phosphate. It functions in the pathway organic acid metabolism; glycolate biosynthesis; glycolate from 2-phosphoglycolate: step 1/1. In terms of biological role, specifically catalyzes the dephosphorylation of 2-phosphoglycolate. Is involved in the dissimilation of the intracellular 2-phosphoglycolate formed during the DNA repair of 3'-phosphoglycolate ends, a major class of DNA lesions induced by oxidative stress. The chain is Phosphoglycolate phosphatase from Cereibacter sphaeroides (strain ATCC 17025 / ATH 2.4.3) (Rhodobacter sphaeroides).